The sequence spans 90 residues: Small ribosomal subunit protein uS15c (90 aa).

Belongs to the universal ribosomal protein uS15 family. As to quaternary structure, part of the 30S ribosomal subunit.

It localises to the plastid. It is found in the chloroplast. This chain is Small ribosomal subunit protein uS15c (rps15), found in Populus alba (White poplar).